Reading from the N-terminus, the 202-residue chain is Apolipoprotein R (202 aa).

A signal peptide spans 1–28; the sequence is MPPNLQRIFPALCLLGVLFLLHCTPVLC. Sushi domains lie at 29-87 and 88-145; these read GCDN…QCKA and LCPK…KCEW. Cystine bridges form between Cys-30–Cys-73, Cys-59–Cys-85, Cys-89–Cys-130, and Cys-116–Cys-143.

In terms of assembly, forms high molecular weight disulfide-linked complexes. Plasma. Found on very low-density lipoprotein (VLDL), on chylomicrons, and in the D &gt; 1.21 g/ml fraction of pig plasma. Found in liver, spleen, lung, bone marrow and lymph node.

It is found in the secreted. Functionally, may be a lipoprotein-borne regulator of either the coagulation or the complement cascades. This chain is Apolipoprotein R (APOR), found in Sus scrofa (Pig).